The following is a 540-amino-acid chain: Suppressor of tumorigenicity 7 protein-like (540 aa).

Helical transmembrane passes span 24–44 (WSWT…VYVL), 68–88 (FYVA…IFEW), 475–495 (LPFF…LAML), and 502–522 (LMGV…GFFA).

Belongs to the ST7 family.

The protein localises to the membrane. This is Suppressor of tumorigenicity 7 protein-like (st7l) from Danio rerio (Zebrafish).